A 175-amino-acid polypeptide reads, in one-letter code: Peptide deformylase (175 aa).

The Fe cation site is built by cysteine 98 and histidine 140. Glutamate 141 is an active-site residue. A Fe cation-binding site is contributed by histidine 144.

The protein belongs to the polypeptide deformylase family. Fe(2+) is required as a cofactor.

It carries out the reaction N-terminal N-formyl-L-methionyl-[peptide] + H2O = N-terminal L-methionyl-[peptide] + formate. Its function is as follows. Removes the formyl group from the N-terminal Met of newly synthesized proteins. Requires at least a dipeptide for an efficient rate of reaction. N-terminal L-methionine is a prerequisite for activity but the enzyme has broad specificity at other positions. In Bradyrhizobium sp. (strain BTAi1 / ATCC BAA-1182), this protein is Peptide deformylase.